The following is a 183-amino-acid chain: Shikimate kinase (183 aa).

19 to 24 provides a ligand contact to ATP; sequence GAGKTT. T23 contacts Mg(2+). Positions 41, 65, and 87 each coordinate substrate. Residue R124 coordinates ATP. R143 contacts substrate.

It belongs to the shikimate kinase family. As to quaternary structure, monomer. Mg(2+) is required as a cofactor.

The protein resides in the cytoplasm. The catalysed reaction is shikimate + ATP = 3-phosphoshikimate + ADP + H(+). It participates in metabolic intermediate biosynthesis; chorismate biosynthesis; chorismate from D-erythrose 4-phosphate and phosphoenolpyruvate: step 5/7. Its function is as follows. Catalyzes the specific phosphorylation of the 3-hydroxyl group of shikimic acid using ATP as a cosubstrate. This is Shikimate kinase from Thermosynechococcus vestitus (strain NIES-2133 / IAM M-273 / BP-1).